Consider the following 692-residue polypeptide: Elongation factor G (692 aa).

The tr-type G domain occupies 8–282 (AKTRNIGIMA…AVIAYLPSPL (275 aa)). Residues 17 to 24 (AHVDAGKT), 81 to 85 (DTPGH), and 135 to 138 (NKMD) each bind GTP.

Belongs to the TRAFAC class translation factor GTPase superfamily. Classic translation factor GTPase family. EF-G/EF-2 subfamily.

It is found in the cytoplasm. Catalyzes the GTP-dependent ribosomal translocation step during translation elongation. During this step, the ribosome changes from the pre-translocational (PRE) to the post-translocational (POST) state as the newly formed A-site-bound peptidyl-tRNA and P-site-bound deacylated tRNA move to the P and E sites, respectively. Catalyzes the coordinated movement of the two tRNA molecules, the mRNA and conformational changes in the ribosome. The protein is Elongation factor G of Streptococcus pyogenes serotype M49 (strain NZ131).